Reading from the N-terminus, the 913-residue chain is Bifunctional uridylyltransferase/uridylyl-removing enzyme (913 aa).

The segment at 1–358 (MFNCDVTAID…PDEERPKKQP (358 aa)) is uridylyltransferase. Residues 359 to 729 (INARFNQVGD…EHRELALDAV (371 aa)) are uridylyl-removing. The HD domain maps to 476 to 592 (VDAHTLFLIR…TLFADLVGNV (117 aa)). 2 ACT domains span residues 730–815 (QVFV…RIPR) and 838–913 (IMSL…NDRV).

Belongs to the GlnD family. Mg(2+) is required as a cofactor.

It carries out the reaction [protein-PII]-L-tyrosine + UTP = [protein-PII]-uridylyl-L-tyrosine + diphosphate. The enzyme catalyses [protein-PII]-uridylyl-L-tyrosine + H2O = [protein-PII]-L-tyrosine + UMP + H(+). With respect to regulation, uridylyltransferase (UTase) activity is inhibited by glutamine, while glutamine activates uridylyl-removing (UR) activity. Functionally, modifies, by uridylylation and deuridylylation, the PII regulatory proteins (GlnB and homologs), in response to the nitrogen status of the cell that GlnD senses through the glutamine level. Under low glutamine levels, catalyzes the conversion of the PII proteins and UTP to PII-UMP and PPi, while under higher glutamine levels, GlnD hydrolyzes PII-UMP to PII and UMP (deuridylylation). Thus, controls uridylylation state and activity of the PII proteins, and plays an important role in the regulation of nitrogen assimilation and metabolism. This is Bifunctional uridylyltransferase/uridylyl-removing enzyme from Psychrobacter cryohalolentis (strain ATCC BAA-1226 / DSM 17306 / VKM B-2378 / K5).